The following is a 282-amino-acid chain: 40S small subunit processome assembly factor 1 (282 aa).

2 disordered regions span residues 27–98 and 121–143; these read YDLG…SEVP and FHSR…NKTK. Positions 48–59 are enriched in basic and acidic residues; it reads KRDSETVADRAA. 2 positions are modified to phosphoserine: S67 and S75. Residues 89 to 98 show a composition bias toward low complexity; sequence SAPAAPSEVP. Residues 131–143 show a composition bias toward basic and acidic residues; that stretch reads KSEEDKPAKNKTK. K173 carries the post-translational modification N6-acetyllysine. Basic and acidic residues predominate over residues 208–226; that stretch reads EKRTSMEEEKRAAQETDIF. The tract at residues 208–254 is disordered; the sequence is EKRTSMEEEKRAAQETDIFKRKKRKGRSQEDRRSKKLAPSILSSGRA. A Phosphoserine modification is found at S268.

As to quaternary structure, part of the small subunit (SSU) processome, composed of more than 70 proteins and the RNA chaperone small nucleolar RNA (snoRNA) U3.

The protein resides in the chromosome. It localises to the nucleus. It is found in the nucleolus. Part of the small subunit (SSU) processome, first precursor of the small eukaryotic ribosomal subunit. During the assembly of the SSU processome in the nucleolus, many ribosome biogenesis factors, an RNA chaperone and ribosomal proteins associate with the nascent pre-rRNA and work in concert to generate RNA folding, modifications, rearrangements and cleavage as well as targeted degradation of pre-ribosomal RNA by the RNA exosome. Prevents helicase DHX37 to be recruited before post-A1 state. The sequence is that of 40S small subunit processome assembly factor 1 from Rattus norvegicus (Rat).